The chain runs to 48 residues: Large ribosomal subunit protein bL32c (48 aa).

It belongs to the bacterial ribosomal protein bL32 family.

The protein resides in the plastid. It is found in the chloroplast. The protein is Large ribosomal subunit protein bL32c (rpl32) of Vicia faba (Broad bean).